The following is a 199-amino-acid chain: MIIHNLGIKDYTEIWEQMKEFTAVRDSNSYDELWLLEHYPVYTQGQAGKPEHVLNPNSIKIVQSDRGGQVTYHGPGQLVAYVLMDIRRRNLGIRTLVAKLEEILISVLEHYRIPANIRSGAPGVYVGEKKIASIGLRVKNGCTYHGIALNVNMDLSPFLGINPCGFAKMEMTQMSHFHPNIQLEEVSQHFVQYFLTQFK.

One can recognise a BPL/LPL catalytic domain in the interval 27–199 (SNSYDELWLL…FVQYFLTQFK (173 aa)). Substrate contacts are provided by residues 66 to 73 (RGGQVTYH), 133 to 135 (SIG), and 146 to 148 (GIA). The active-site Acyl-thioester intermediate is the Cys164.

This sequence belongs to the LipB family.

Its subcellular location is the cytoplasm. The enzyme catalyses octanoyl-[ACP] + L-lysyl-[protein] = N(6)-octanoyl-L-lysyl-[protein] + holo-[ACP] + H(+). It functions in the pathway protein modification; protein lipoylation via endogenous pathway; protein N(6)-(lipoyl)lysine from octanoyl-[acyl-carrier-protein]: step 1/2. Functionally, catalyzes the transfer of endogenously produced octanoic acid from octanoyl-acyl-carrier-protein onto the lipoyl domains of lipoate-dependent enzymes. Lipoyl-ACP can also act as a substrate although octanoyl-ACP is likely to be the physiological substrate. This Legionella pneumophila (strain Lens) protein is Octanoyltransferase.